A 432-amino-acid polypeptide reads, in one-letter code: Serine/threonine-protein kinase Sgk1 (432 aa).

The disordered stretch occupies residues 67–93 (PELMNANPSPPPSPSQQINLGPSSNPH). Residues 82 to 92 (QQINLGPSSNP) are compositionally biased toward polar residues. The 258-residue stretch at 99 to 356 (FHFLKVIGKG…FTEIKNHIFF (258 aa)) folds into the Protein kinase domain. Residues 105–113 (IGKGSFGKV) and lysine 128 contribute to the ATP site. Aspartate 223 serves as the catalytic Proton acceptor. The region spanning 357-432 (SPINWDDLIN…SYAPPVDSFL (76 aa)) is the AGC-kinase C-terminal domain.

The protein belongs to the protein kinase superfamily. AGC Ser/Thr protein kinase family.

It is found in the cytoplasm. Its subcellular location is the nucleus. It localises to the endoplasmic reticulum. The enzyme catalyses L-seryl-[protein] + ATP = O-phospho-L-seryl-[protein] + ADP + H(+). It catalyses the reaction L-threonyl-[protein] + ATP = O-phospho-L-threonyl-[protein] + ADP + H(+). Protein kinase that may play an important role in cellular stress response. May be involved in the regulation of processes such as cell survival, neuronal excitability and renal sodium excretion. The protein is Serine/threonine-protein kinase Sgk1 (SGK1) of Gallus gallus (Chicken).